A 371-amino-acid chain; its full sequence is MSL complex subunit 3B (371 aa).

Disordered stretches follow at residues 1–47 and 160–230; these read MATL…DERA and EERA…PQAK. Positions 8-47 are enriched in basic and acidic residues; that stretch reads PKDDGEGKDEGGSDRGDGDSKPKGKKEVEPHTRREADERA. Residues 44–367 enclose the MRG domain; it reads DERAMRIPIP…CEAHYSSKNP (324 aa). A compositionally biased stretch (low complexity) spans 183 to 193; that stretch reads SESQAVAGPAA. Over residues 206–216 the composition is skewed to basic residues; that stretch reads APRRSTRHSTH.

Its subcellular location is the nucleus. Its function is as follows. Probable non-catalytic component of the MSL histone acetyltransferase complex, a multiprotein complex that mediates the majority of histone H4 acetylation at 'Lys-16' (H4K16ac), an epigenetic mark that prevents chromatin compaction. This Mus musculus (Mouse) protein is MSL complex subunit 3B.